The sequence spans 234 residues: Small ribosomal subunit protein uS2 (234 aa).

This sequence belongs to the universal ribosomal protein uS2 family.

The chain is Small ribosomal subunit protein uS2 from Prochlorococcus marinus (strain AS9601).